We begin with the raw amino-acid sequence, 715 residues long: MTTTSAFMLNVRLDNVAVVAIDVPGEKVNTLKAEFATQVRAILKQIRENKALQGVVFISAKADNFIAGADINMIGHCQNAQEAETLARQGQQLMAEIQALPVPVIAAIHGACLGGGLEMALACHRRICTDDVKTVLGLPEVQLGLLPGSGGTQRLPRLVGVSTALDMILTGKQLRARQALKAGLVDDVVPQTILLEAAVELAKKERLAQRTLPVRERILAGPLGRALLFRLVRKKTAQKTQGNYPATERIIDVIETGLAQGSSSGYDAEARAFGELAMTPQSQALRAIFFASTEVKKDPGSDAPPGPLNSVGILGGGLMGGGIAWVTACKGGLPVRIKDINTQGINHALKYSWDLLETKVRRRHIKASERDKQLALISGSTDYRGFSHRDLVIEAVFEDLPLKQQMVAEVEQNCAAHTIFASNTSSLPIGDIAANAARPEQVIGLHFFSPVEKMPLVEVIPHASTSAQTIATTVKLAKKQGKTPIVVSDKAGFYVNRILAPYINEAIRMLTEGERVEHIDAALVKFGFPVGPIQLLDEVGIDTGTKIIPVLEAAYGERFSAPANVVASILNDDRKGRKNGRGFYLYGEKGRKSKKQVDPAIYKLIGVQGQSRLSAQQVAERCVMLMLNEAARCFDEKVIRSARDGDIGAVFGIGFPPFLGGPFRYMDALGPGEMVATLQRLAALYGPRYAPCEQLVRMAERREHFWTNGETDQGN.

The enoyl-CoA hydratase stretch occupies residues 1-190 (MTTTSAFMLN…KAGLVDDVVP (190 aa)). The segment at 306–714 (GPLNSVGILG…FWTNGETDQG (409 aa)) is 3-hydroxyacyl-CoA dehydrogenase.

The protein in the N-terminal section; belongs to the enoyl-CoA hydratase/isomerase family. In the central section; belongs to the 3-hydroxyacyl-CoA dehydrogenase family. Heterotetramer of two alpha chains (FadJ) and two beta chains (FadI).

Its subcellular location is the cytoplasm. It carries out the reaction a (3S)-3-hydroxyacyl-CoA = a (2E)-enoyl-CoA + H2O. The catalysed reaction is a 4-saturated-(3S)-3-hydroxyacyl-CoA = a (3E)-enoyl-CoA + H2O. The enzyme catalyses a (3S)-3-hydroxyacyl-CoA + NAD(+) = a 3-oxoacyl-CoA + NADH + H(+). It catalyses the reaction (3S)-3-hydroxybutanoyl-CoA = (3R)-3-hydroxybutanoyl-CoA. It functions in the pathway lipid metabolism; fatty acid beta-oxidation. Functionally, catalyzes the formation of a hydroxyacyl-CoA by addition of water on enoyl-CoA. Also exhibits 3-hydroxyacyl-CoA epimerase and 3-hydroxyacyl-CoA dehydrogenase activities. The sequence is that of Fatty acid oxidation complex subunit alpha from Salmonella typhimurium (strain LT2 / SGSC1412 / ATCC 700720).